The chain runs to 252 residues: Ribosomal RNA small subunit methyltransferase J (252 aa).

S-adenosyl-L-methionine is bound by residues 101 to 102 (RD), 117 to 118 (ER), 153 to 154 (SS), and D171.

The protein belongs to the methyltransferase superfamily. RsmJ family.

The protein localises to the cytoplasm. The catalysed reaction is guanosine(1516) in 16S rRNA + S-adenosyl-L-methionine = N(2)-methylguanosine(1516) in 16S rRNA + S-adenosyl-L-homocysteine + H(+). Functionally, specifically methylates the guanosine in position 1516 of 16S rRNA. The sequence is that of Ribosomal RNA small subunit methyltransferase J from Salmonella schwarzengrund (strain CVM19633).